The chain runs to 175 residues: Thermoresistant gluconokinase (175 aa).

ATP is bound at residue 15–22 (GVSGSGKS).

It belongs to the gluconokinase GntK/GntV family.

The enzyme catalyses D-gluconate + ATP = 6-phospho-D-gluconate + ADP + H(+). It participates in carbohydrate acid metabolism; D-gluconate degradation. This is Thermoresistant gluconokinase (gntK) from Escherichia coli (strain K12).